A 187-amino-acid chain; its full sequence is Acireductone dioxygenase (187 aa).

The Fe(2+) site is built by histidine 87, histidine 89, glutamate 93, and histidine 136. 4 residues coordinate Ni(2+): histidine 87, histidine 89, glutamate 93, and histidine 136.

Belongs to the acireductone dioxygenase (ARD) family. Requires Fe(2+) as cofactor. It depends on Ni(2+) as a cofactor.

The protein localises to the cytoplasm. Its subcellular location is the nucleus. The catalysed reaction is 1,2-dihydroxy-5-(methylsulfanyl)pent-1-en-3-one + O2 = 4-methylsulfanyl-2-oxobutanoate + formate + 2 H(+). It carries out the reaction 1,2-dihydroxy-5-(methylsulfanyl)pent-1-en-3-one + O2 = 3-(methylsulfanyl)propanoate + CO + formate + 2 H(+). It participates in amino-acid biosynthesis; L-methionine biosynthesis via salvage pathway; L-methionine from S-methyl-5-thio-alpha-D-ribose 1-phosphate: step 5/6. In terms of biological role, catalyzes 2 different reactions between oxygen and the acireductone 1,2-dihydroxy-3-keto-5-methylthiopentene (DHK-MTPene) depending upon the metal bound in the active site. Fe-containing acireductone dioxygenase (Fe-ARD) produces formate and 2-keto-4-methylthiobutyrate (KMTB), the alpha-ketoacid precursor of methionine in the methionine recycle pathway. Ni-containing acireductone dioxygenase (Ni-ARD) produces methylthiopropionate, carbon monoxide and formate, and does not lie on the methionine recycle pathway. This chain is Acireductone dioxygenase, found in Cryptococcus neoformans var. neoformans serotype D (strain JEC21 / ATCC MYA-565) (Filobasidiella neoformans).